The primary structure comprises 202 residues: MHNASDIQSALVPMVIEQTAKGERSFDIYSRLLKERIIFLVGQVEEHMANLIVAQLLFLESESPDKDIFLYINSPGGSVTAGMAIYDTMQFIKPNVSTVCIGQAASMGAFLLAGGEKGKRFCLPNSRVMIHQPLGGFQGQASDIAIHAQEILGIKNKLNQMLADHTGQPLEVIERDTDRDNFMSATQAVEYGLVDAVMTKRG.

The active-site Nucleophile is S106. H131 is a catalytic residue.

The protein belongs to the peptidase S14 family. As to quaternary structure, fourteen ClpP subunits assemble into 2 heptameric rings which stack back to back to give a disk-like structure with a central cavity, resembling the structure of eukaryotic proteasomes.

Its subcellular location is the cytoplasm. It catalyses the reaction Hydrolysis of proteins to small peptides in the presence of ATP and magnesium. alpha-casein is the usual test substrate. In the absence of ATP, only oligopeptides shorter than five residues are hydrolyzed (such as succinyl-Leu-Tyr-|-NHMec, and Leu-Tyr-Leu-|-Tyr-Trp, in which cleavage of the -Tyr-|-Leu- and -Tyr-|-Trp bonds also occurs).. Functionally, cleaves peptides in various proteins in a process that requires ATP hydrolysis. Has a chymotrypsin-like activity. Plays a major role in the degradation of misfolded proteins. The chain is ATP-dependent Clp protease proteolytic subunit from Shewanella oneidensis (strain ATCC 700550 / JCM 31522 / CIP 106686 / LMG 19005 / NCIMB 14063 / MR-1).